The chain runs to 460 residues: ATP synthase subunit beta (460 aa).

150 to 157 contributes to the ATP binding site; the sequence is GGAGVGKT.

This sequence belongs to the ATPase alpha/beta chains family. F-type ATPases have 2 components, CF(1) - the catalytic core - and CF(0) - the membrane proton channel. CF(1) has five subunits: alpha(3), beta(3), gamma(1), delta(1), epsilon(1). CF(0) has three main subunits: a(1), b(2) and c(9-12). The alpha and beta chains form an alternating ring which encloses part of the gamma chain. CF(1) is attached to CF(0) by a central stalk formed by the gamma and epsilon chains, while a peripheral stalk is formed by the delta and b chains.

It localises to the cell inner membrane. The catalysed reaction is ATP + H2O + 4 H(+)(in) = ADP + phosphate + 5 H(+)(out). Produces ATP from ADP in the presence of a proton gradient across the membrane. The catalytic sites are hosted primarily by the beta subunits. In Serratia proteamaculans (strain 568), this protein is ATP synthase subunit beta.